The following is a 301-amino-acid chain: Ribosomal protein L11 methyltransferase (301 aa).

Residues Thr-146, Gly-167, Asp-189, and Asn-237 each coordinate S-adenosyl-L-methionine.

It belongs to the methyltransferase superfamily. PrmA family.

It is found in the cytoplasm. It catalyses the reaction L-lysyl-[protein] + 3 S-adenosyl-L-methionine = N(6),N(6),N(6)-trimethyl-L-lysyl-[protein] + 3 S-adenosyl-L-homocysteine + 3 H(+). Functionally, methylates ribosomal protein L11. The chain is Ribosomal protein L11 methyltransferase from Prochlorococcus marinus (strain MIT 9303).